The sequence spans 219 residues: UPF0502 protein Swoo_2055 (219 aa).

Residues Gln167–Glu195 are disordered. Residues Glu177–Asp191 show a composition bias toward basic and acidic residues.

The protein belongs to the UPF0502 family.

The chain is UPF0502 protein Swoo_2055 from Shewanella woodyi (strain ATCC 51908 / MS32).